The primary structure comprises 184 residues: MINIPTSILCRLGARSAISRSFGTSVVTKSEAKTPIQKFGWEYLKKQRDMKRPIAPHLTIYQPQLTWMLSGFHRISGCVMAGTLLVGGLGFAVLPLDFTTFVEYIRGWNLPCAVTAVFKYIIAFPIIFHTLNGIRFLGFDLAKGVDNIGQVYKSGWLVFGVSAVIALAIVINSCQNKSKAVKTA.

Residues 65–94 (LTWMLSGFHRISGCVMAGTLLVGGLGFAVL) traverse the membrane as a helical segment. Over 95–114 (PLDFTTFVEYIRGWNLPCAV) the chain is Mitochondrial intermembrane. A helical membrane pass occupies residues 115 to 139 (TAVFKYIIAFPIIFHTLNGIRFLGF). Position 129 (histidine 129) interacts with heme. The Mitochondrial matrix portion of the chain corresponds to 140–147 (DLAKGVDN). Residues 148–169 (IGQVYKSGWLVFGVSAVIALAI) traverse the membrane as a helical segment. Over 170–172 (VIN) the chain is Mitochondrial intermembrane.

This sequence belongs to the cytochrome b560 family. As to quaternary structure, component of complex II composed of four subunits: a flavoprotein (FP), iron-sulfur protein (IP), and a cytochrome b560 composed of two transmembrane proteins. Heme is required as a cofactor.

It localises to the mitochondrion inner membrane. The protein operates within carbohydrate metabolism; tricarboxylic acid cycle. Its function is as follows. Membrane-anchoring subunit of succinate dehydrogenase (SDH) that is involved in complex II of the mitochondrial electron transport chain and is responsible for transferring electrons from succinate to ubiquinone (coenzyme Q). Mediates resistance to enteropathogenic E.coli infection. The polypeptide is Succinate dehydrogenase cytochrome b560 subunit, mitochondrial (mev-1) (Caenorhabditis briggsae).